The primary structure comprises 160 residues: Phosphopantetheine adenylyltransferase (160 aa).

Position 9 (Ser-9) interacts with substrate. Residues 9–10 (SF) and His-17 each bind ATP. Substrate is bound by residues Lys-41, Ile-73, and Lys-87. ATP-binding positions include 88-90 (GLR), Glu-98, and 122-128 (YSFVSSS).

This sequence belongs to the bacterial CoaD family. Homohexamer. It depends on Mg(2+) as a cofactor.

Its subcellular location is the cytoplasm. It carries out the reaction (R)-4'-phosphopantetheine + ATP + H(+) = 3'-dephospho-CoA + diphosphate. The protein operates within cofactor biosynthesis; coenzyme A biosynthesis; CoA from (R)-pantothenate: step 4/5. Reversibly transfers an adenylyl group from ATP to 4'-phosphopantetheine, yielding dephospho-CoA (dPCoA) and pyrophosphate. The protein is Phosphopantetheine adenylyltransferase of Mycolicibacterium gilvum (strain PYR-GCK) (Mycobacterium gilvum (strain PYR-GCK)).